A 208-amino-acid polypeptide reads, in one-letter code: Kinetochore protein Spc25 (208 aa).

Residues 31 to 101 (SKIAAKHQLI…KKQRRDELMG (71 aa)) adopt a coiled-coil conformation.

The protein belongs to the SPC25 family. As to quaternary structure, component of the Ndc80 complex, which is composed of Ndc80, Nuf2 and Spc25.

The protein localises to the nucleus. It is found in the chromosome. Its subcellular location is the centromere. The protein resides in the kinetochore. In terms of biological role, acts as a component of the essential kinetochore-associated Ndc80 complex, which is required for chromosome segregation and spindle checkpoint activity during meiosis and mitosis. Required for kinetochore integrity and the organization of stable microtubule binding sites in the outer plate of the kinetochore. Participates in SAC signaling that responds specifically to disruptions in spindle microtubule dynamics. The NDC80 complex synergistically enhances the affinity of the SKA1 complex for microtubules and may allow the NDC80 complex to track depolymerizing microtubules. In Drosophila mojavensis (Fruit fly), this protein is Kinetochore protein Spc25.